We begin with the raw amino-acid sequence, 297 residues long: 4-hydroxy-tetrahydrodipicolinate synthase (297 aa).

Residue Thr-49 participates in pyruvate binding. The active-site Proton donor/acceptor is the Tyr-137. Lys-166 functions as the Schiff-base intermediate with substrate in the catalytic mechanism. A pyruvate-binding site is contributed by Ile-208.

Belongs to the DapA family. Homotetramer; dimer of dimers.

The protein resides in the cytoplasm. The enzyme catalyses L-aspartate 4-semialdehyde + pyruvate = (2S,4S)-4-hydroxy-2,3,4,5-tetrahydrodipicolinate + H2O + H(+). It participates in amino-acid biosynthesis; L-lysine biosynthesis via DAP pathway; (S)-tetrahydrodipicolinate from L-aspartate: step 3/4. Functionally, catalyzes the condensation of (S)-aspartate-beta-semialdehyde [(S)-ASA] and pyruvate to 4-hydroxy-tetrahydrodipicolinate (HTPA). In Chlorobium phaeobacteroides (strain BS1), this protein is 4-hydroxy-tetrahydrodipicolinate synthase.